Reading from the N-terminus, the 418-residue chain is Adenosylhomocysteinase (418 aa).

Substrate-binding residues include T53, D125, and E150. 151–153 (TTT) is an NAD(+) binding site. Substrate contacts are provided by K180 and D184. NAD(+) contacts are provided by residues N185, 214 to 219 (GYGWCG), E237, N272, 293 to 295 (SGH), and N340.

Belongs to the adenosylhomocysteinase family. It depends on NAD(+) as a cofactor.

The protein localises to the cytoplasm. The enzyme catalyses S-adenosyl-L-homocysteine + H2O = L-homocysteine + adenosine. It functions in the pathway amino-acid biosynthesis; L-homocysteine biosynthesis; L-homocysteine from S-adenosyl-L-homocysteine: step 1/1. May play a key role in the regulation of the intracellular concentration of adenosylhomocysteine. The chain is Adenosylhomocysteinase from Aquifex aeolicus (strain VF5).